We begin with the raw amino-acid sequence, 459 residues long: ATP synthase subunit beta (459 aa).

148–155 (GGAGVGKT) provides a ligand contact to ATP.

It belongs to the ATPase alpha/beta chains family. F-type ATPases have 2 components, CF(1) - the catalytic core - and CF(0) - the membrane proton channel. CF(1) has five subunits: alpha(3), beta(3), gamma(1), delta(1), epsilon(1). CF(0) has three main subunits: a(1), b(2) and c(9-12). The alpha and beta chains form an alternating ring which encloses part of the gamma chain. CF(1) is attached to CF(0) by a central stalk formed by the gamma and epsilon chains, while a peripheral stalk is formed by the delta and b chains.

It localises to the cell inner membrane. The catalysed reaction is ATP + H2O + 4 H(+)(in) = ADP + phosphate + 5 H(+)(out). Its function is as follows. Produces ATP from ADP in the presence of a proton gradient across the membrane. The catalytic sites are hosted primarily by the beta subunits. This Cellvibrio japonicus (strain Ueda107) (Pseudomonas fluorescens subsp. cellulosa) protein is ATP synthase subunit beta.